Here is a 298-residue protein sequence, read N- to C-terminus: MGSATPPRLQKFPATAPADDIYAAFKQDGCVIIEGFVPPDQMARFSQEIQPAMEKIQVQVTNDGNSNDRVKRFSKLVTTSPTFRHEILENDLMHELLQRVFSKPGEGLGYHFNDTMVIEVQPGAPAQRLHRDQELYPWWNSMGPNAPECLVNFFCAVTPFTAENGATRLVPGSNRWPELTLINAAECPQYGNIESAPAIMQPGDCYMMSGKVIHGAGHNATLSDQRRALAFSTIRRELRPVQAFPLWIPMKIARELSPRTQAMFGFRSSTQHCDVDTVHFWGNDGKDIGEHLGLMSSA.

Substrate is bound by residues R72 and Q127. Fe cation is bound by residues H130 and D132. T167 provides a ligand contact to substrate. H214 serves as a coordination point for Fe cation. R226 contacts substrate.

This sequence belongs to the PhyH family. Homodimer. It depends on Fe cation as a cofactor.

The catalysed reaction is preaustinoid A1 + 2-oxoglutarate + O2 = preaustinoid A2 + succinate + CO2 + H2O. It catalyses the reaction preaustinoid A2 + 2-oxoglutarate + O2 = preaustinoid A3 + succinate + CO2 + H2O. It carries out the reaction berkeleyone A + 2-oxoglutarate + O2 = preaustinoid A + succinate + CO2 + H2O. The protein operates within secondary metabolite biosynthesis; terpenoid biosynthesis. Functionally, multifunctional dioxygenase; part of the gene cluster that mediates the biosynthesis of calidodehydroaustin, a fungal meroterpenoid. The first step of the pathway is the synthesis of 3,5-dimethylorsellinic acid by the polyketide synthase ausA. 3,5-dimethylorsellinic acid is then prenylated by the polyprenyl transferase ausN. Further epoxidation by the FAD-dependent monooxygenase ausM and cyclization by the probable terpene cyclase ausL lead to the formation of protoaustinoid A. Protoaustinoid A is then oxidized to spiro-lactone preaustinoid A3 by the combined action of the FAD-binding monooxygenases ausB and ausC, and the dioxygenase ausE. Acid-catalyzed keto-rearrangement and ring contraction of the tetraketide portion of preaustinoid A3 by ausJ lead to the formation of preaustinoid A4. The aldo-keto reductase ausK, with the help of ausH, is involved in the next step by transforming preaustinoid A4 into isoaustinone which is in turn hydroxylated by the P450 monooxygenase ausI to form austinolide. The cytochrome P450 monooxygenase ausG modifies austinolide to austinol. Austinol is further acetylated to austin by the O-acetyltransferase ausP, which spontaneously changes to dehydroaustin. The cytochrome P450 monooxygenase ausR then converts dehydroaustin is into 7-dehydrodehydroaustin. The hydroxylation catalyzed by ausR permits the O-acetyltransferase ausQ to add an additional acetyl group to the molecule, leading to the formation of acetoxydehydroaustin. The short chain dehydrogenase ausT catalyzes the reduction of the double bond present between carbon atoms 1 and 2 to convert 7-dehydrodehydroaustin into 1,2-dihydro-7-hydroxydehydroaustin. AusQ catalyzes not only an acetylation reaction but also the addition of the PKS ausV diketide product to 1,2-dihydro-7-hydroxydehydroaustin, forming precalidodehydroaustin. Finally, the iron/alpha-ketoglutarate-dependent dioxygenase converts precalidodehydroaustin into calidodehydroaustin. In Aspergillus calidoustus, this protein is Multifunctional dioxygenase ausE.